Consider the following 204-residue polypeptide: Large ribosomal subunit protein eL15 (204 aa).

2 disordered regions span residues 71-91 (RKRPVPKGATYGKPKSHGVNQ) and 159-182 (REMRGKTSAGRKHRGLGRGFHYSQ). The span at 159-174 (REMRGKTSAGRKHRGL) shows a compositional bias: basic residues.

It belongs to the eukaryotic ribosomal protein eL15 family.

The chain is Large ribosomal subunit protein eL15 (RPL15) from Faxonius limosus (Spinycheek crayfish).